The chain runs to 270 residues: Formamidopyrimidine-DNA glycosylase (270 aa).

Pro-2 functions as the Schiff-base intermediate with DNA in the catalytic mechanism. Glu-3 acts as the Proton donor in catalysis. Lys-58 functions as the Proton donor; for beta-elimination activity in the catalytic mechanism. Residues His-91, Arg-110, and Lys-151 each contribute to the DNA site. The FPG-type zinc finger occupies 236–270 (FVYGRGGEACKVCGTELRNVVLGQRASVFCPRCQR). Arg-260 (proton donor; for delta-elimination activity) is an active-site residue.

Belongs to the FPG family. In terms of assembly, monomer. It depends on Zn(2+) as a cofactor.

The catalysed reaction is Hydrolysis of DNA containing ring-opened 7-methylguanine residues, releasing 2,6-diamino-4-hydroxy-5-(N-methyl)formamidopyrimidine.. It carries out the reaction 2'-deoxyribonucleotide-(2'-deoxyribose 5'-phosphate)-2'-deoxyribonucleotide-DNA = a 3'-end 2'-deoxyribonucleotide-(2,3-dehydro-2,3-deoxyribose 5'-phosphate)-DNA + a 5'-end 5'-phospho-2'-deoxyribonucleoside-DNA + H(+). Its function is as follows. Involved in base excision repair of DNA damaged by oxidation or by mutagenic agents. Acts as a DNA glycosylase that recognizes and removes damaged bases. Has a preference for oxidized purines, such as 7,8-dihydro-8-oxoguanine (8-oxoG). Has AP (apurinic/apyrimidinic) lyase activity and introduces nicks in the DNA strand. Cleaves the DNA backbone by beta-delta elimination to generate a single-strand break at the site of the removed base with both 3'- and 5'-phosphates. The chain is Formamidopyrimidine-DNA glycosylase from Pseudomonas fluorescens (strain SBW25).